The chain runs to 506 residues: (+)-vincadifformine 19-hydroxylase (506 aa).

Topologically, residues 1–4 (MELD) are lumenal. Residues 5-25 (ECSPSIFIISFIFIAISIAIL) traverse the membrane as a helical segment. Residues 26 to 506 (RRIRPKKTKA…DLHLIPTSYM (481 aa)) are Cytoplasmic-facing. Heme is bound at residue Cys450.

This sequence belongs to the cytochrome P450 family. It depends on heme as a cofactor. In terms of tissue distribution, accumulates progressively in roots.

It localises to the endoplasmic reticulum membrane. It catalyses the reaction (+)-vincadifformine + reduced [NADPH--hemoprotein reductase] + O2 = (+)-minovincinine + oxidized [NADPH--hemoprotein reductase] + H2O + H(+). It functions in the pathway alkaloid biosynthesis. The enantiomer (-)-vincadifformine acts as a competitive inhibitor. Functionally, component of the monoterpenoid indole alkaloids (MIAs, e.g. echitovenine, tabersonine, lochnericine, 19-hydroxytabersonine and horhammericine) biosynthetic pathway; MIAs are used in cancer treatment and other medical applications. Cytochrome P450 catalyzing the hydroxylation of (+)-vincadifformine to (+)-minovincinine. This is (+)-vincadifformine 19-hydroxylase from Catharanthus roseus (Madagascar periwinkle).